Consider the following 269-residue polypeptide: Regulatory protein RecX (269 aa).

Belongs to the RecX family.

The protein resides in the cytoplasm. Functionally, modulates RecA activity. In Lactococcus lactis subsp. cremoris (strain MG1363), this protein is Regulatory protein RecX.